The sequence spans 689 residues: Beta-adrenergic receptor kinase 1 (689 aa).

The segment at 1 to 190 is N-terminal; that stretch reads MADLEAVLAD…ELNIHLTMND (190 aa). The RGS domain occupies 54–175; that stretch reads TFEKIFSQKL…IESEKFTRFC (122 aa). One can recognise a Protein kinase domain in the interval 191–453; the sequence is FSVHRIIGRG…AQEVKEDPFF (263 aa). ATP-binding positions include 197-205 and Lys-220; that span reads IGRGGFGEV. Asp-317 acts as the Proton acceptor in catalysis. The AGC-kinase C-terminal domain maps to 454 to 521; sequence KAVDWQMVLL…TISERWQQEV (68 aa). Positions 558-652 constitute a PH domain; sequence DCIMHGYMSK…WKKELRDVYR (95 aa). The tract at residues 665–689 is disordered; it reads KNKPRSPVVELSKMPLTQRGSANGL. Phosphoserine is present on Ser-670.

It belongs to the protein kinase superfamily. AGC Ser/Thr protein kinase family. GPRK subfamily. In terms of assembly, interacts with the heterodimer formed by GNB1 and GNG2. Interacts with GIT1. Interacts with, and phosphorylates chemokine-stimulated CCR5. Interacts with ARRB1. Interacts with LPAR1 and LPAR2. Interacts with RALA in response to LPAR1 activation. ADRBK1 and RALA mutually inhibit each other's binding to LPAR1. Interacts with ADRB2.

The protein resides in the cytoplasm. Its subcellular location is the cell membrane. It is found in the postsynapse. It localises to the presynapse. The enzyme catalyses [beta-adrenergic receptor] + ATP = [beta-adrenergic receptor]-phosphate + ADP + H(+). With respect to regulation, in contrast to other AGC family kinases, the catalytic activity is solely regulated by the binding of substrates and ligands, not by phosphorylation of the kinase domain. Its function is as follows. Specifically phosphorylates the agonist-occupied form of the beta-adrenergic and closely related receptors, probably inducing a desensitization of them. Does not act on HTR1B/5-hydroxytryptamine 1B receptor. Key regulator of LPAR1 signaling. Competes with RALA for binding to LPAR1 thus affecting the signaling properties of the receptor. Desensitizes LPAR1 and LPAR2 in a phosphorylation-independent manner. Inhibits relaxation of airway smooth muscle in response to blue light. In Didelphis virginiana (North American opossum), this protein is Beta-adrenergic receptor kinase 1.